A 108-amino-acid polypeptide reads, in one-letter code: Translation initiation factor 1A (108 aa).

One can recognise an S1-like domain in the interval Ile10–Thr84.

It belongs to the eIF-1A family.

In terms of biological role, seems to be required for maximal rate of protein biosynthesis. Enhances ribosome dissociation into subunits and stabilizes the binding of the initiator Met-tRNA(I) to 40 S ribosomal subunits. The protein is Translation initiation factor 1A of Picrophilus torridus (strain ATCC 700027 / DSM 9790 / JCM 10055 / NBRC 100828 / KAW 2/3).